A 307-amino-acid polypeptide reads, in one-letter code: Zinc transporter ZIP9 (307 aa).

Residues 4–24 (FISISLLSLAMLVGCYVAGII) traverse the membrane as a helical segment. Asn-29 carries an N-linked (GlcNAc...) asparagine glycan. 5 helical membrane-spanning segments follow: residues 35–55 (LKLV…AVIV), 106–126 (AYIG…DQIG), 146–166 (ITTT…LGAA), 176–196 (LIVF…LVSF), and 210–230 (HLLV…LGLS). An N-linked (GlcNAc...) asparagine glycan is attached at Asn-241. 2 consecutive transmembrane segments (helical) span residues 244–264 (GVAM…HVLP) and 286–306 (LEVA…VGHQ).

It belongs to the ZIP transporter (TC 2.A.5) family. In terms of tissue distribution, highly expressed in pancreas, testis, and pituitary and moderately in the kidney, liver, uterus, heart, prostate, and brain, whereas expression is lower in the ovary and colon.

The protein localises to the golgi apparatus. Its subcellular location is the trans-Golgi network membrane. It is found in the cell membrane. The protein resides in the cytoplasm. It localises to the perinuclear region. The protein localises to the mitochondrion. Its subcellular location is the nucleus. The catalysed reaction is Zn(2+)(in) = Zn(2+)(out). Functionally, transports zinc ions across cell and organelle membranes into the cytoplasm and regulates intracellular zinc homeostasis. Participates in the zinc ions efflux out of the secretory compartments. Regulates intracellular zinc level, resulting in the enhancement of AKT1 and MAPK3/MAPK1 (Erk1/2) phosphorylation in response to the BCR activation. Also functions as a membrane androgen receptor that mediates, through a G protein, the non-classical androgen signaling pathway, characterized by the activation of MAPK3/MAPK1 (Erk1/2) and transcription factors CREB1 or ATF1. This pathway contributes to CLDN1 and CLDN5 expression and tight junction formation between adjacent Sertoli cells. Mediates androgen-induced vascular endothelial cell proliferation through activation of an inhibitory G protein leading to the AKT1 and MAPK3/MAPK1 (Erk1/2) activation which in turn modulate inhibition (phosphorylation) of GSK3B and CCND1 transcription. Moreover, has dual functions as a membrane-bound androgen receptor and as an androgen-dependent zinc transporter both of which are mediated through an inhibitory G protein (Gi) that mediates both MAP kinase and zinc signaling leading to the androgen-dependent apoptotic process. The polypeptide is Zinc transporter ZIP9 (Homo sapiens (Human)).